A 261-amino-acid chain; its full sequence is CD40 ligand (261 aa).

Residues M1–K22 are Cytoplasmic-facing. The chain crosses the membrane as a helical; Signal-anchor for type II membrane protein span at residues I23–A43. Residues A44–N240 lie on the Extracellular side of the membrane. Positions I122–L261 constitute a THD domain. A disulfide bridge connects residues C178 and C218. A glycan (N-linked (GlcNAc...) asparagine) is linked at N240.

It belongs to the tumor necrosis factor family. Homotrimer. Interacts with CD28. CD40 ligand, soluble form: Exists as either a monomer or a homotrimer. Forms a ternary complex between CD40 and integrins for CD40-CD40LG signaling. The soluble form derives from the membrane form by proteolytic processing.

It localises to the cell membrane. The protein localises to the cell surface. It is found in the secreted. Cytokine that acts as a ligand to CD40/TNFRSF5. Costimulates T-cell proliferation and cytokine production. Its cross-linking on T-cells generates a costimulatory signal which enhances the production of IL4 and IL10 in conjunction with the TCR/CD3 ligation and CD28 costimulation. Induces the activation of NF-kappa-B. Induces the activation of kinases MAPK8 and PAK2 in T-cells. Mediates B-cell proliferation in the absence of co-stimulus as well as IgE production in the presence of IL4. Involved in immunoglobulin class switching. Its function is as follows. Acts as a ligand for integrins, specifically ITGA5:ITGB1 and ITGAV:ITGB3; both integrins and the CD40 receptor are required for activation of CD40-CD40LG signaling, which have cell-type dependent effects, such as B-cell activation, NF-kappa-B signaling and anti-apoptotic signaling. This chain is CD40 ligand (CD40LG), found in Sus scrofa (Pig).